Reading from the N-terminus, the 648-residue chain is Serine/threonine-protein phosphatase 1 regulatory subunit PIG1 (648 aa).

Residues 20–51 show a composition bias toward low complexity; that stretch reads STSSFVSSTTSNSFSPLEDSTSASSSTSSSSS. The segment at 20-52 is disordered; sequence STSSFVSSTTSNSFSPLEDSTSASSSTSSSSSG. The 131-residue stretch at 201 to 331 folds into the CBM21 domain; sequence HSLELSDPVS…NNDYKNYEIT (131 aa). Residues 593-609 are compositionally biased toward polar residues; it reads RESSSPEISPLNTTTSL. The interval 593-629 is disordered; it reads RESSSPEISPLNTTTSLPFFPGDNMSDSSGEYEERTS.

Its function is as follows. Regulates the activity of glycogen synthase. It is most probably a regulatory subunit for protein phosphatase type 1. This is Serine/threonine-protein phosphatase 1 regulatory subunit PIG1 (PIG1) from Saccharomyces cerevisiae (strain ATCC 204508 / S288c) (Baker's yeast).